A 243-amino-acid polypeptide reads, in one-letter code: Carboxy-S-adenosyl-L-methionine synthase (243 aa).

S-adenosyl-L-methionine is bound by residues Tyr-40, 65–67 (GCS), 90–91 (DN), 118–119 (DI), Asn-133, and Arg-200.

This sequence belongs to the class I-like SAM-binding methyltransferase superfamily. Cx-SAM synthase family. In terms of assembly, homodimer.

The enzyme catalyses prephenate + S-adenosyl-L-methionine = carboxy-S-adenosyl-L-methionine + 3-phenylpyruvate + H2O. Its function is as follows. Catalyzes the conversion of S-adenosyl-L-methionine (SAM) to carboxy-S-adenosyl-L-methionine (Cx-SAM). This is Carboxy-S-adenosyl-L-methionine synthase from Shewanella oneidensis (strain ATCC 700550 / JCM 31522 / CIP 106686 / LMG 19005 / NCIMB 14063 / MR-1).